A 636-amino-acid polypeptide reads, in one-letter code: Polyadenylate-binding protein 1 (636 aa).

Methionine 1 bears the N-acetylmethionine mark. RRM domains are found at residues 11 to 89 (ASLY…WSQR), 99 to 175 (GNIF…RFKS), 191 to 268 (TNVY…RAQK), and 294 to 370 (VNLY…LAQR). A CSDE1-binding region spans residues 166–289 (RKVFVGRFKS…FEQMKQDRIT (124 aa)). Lysine 299 carries the post-translational modification N6-methyllysine. Position 315 is a phosphoserine (serine 315). Phosphothreonine is present on threonine 319. Residues arginine 385, arginine 419, arginine 432, and arginine 436 each carry the omega-N-methylarginine modification. Omega-N-methylated arginine; by CARM1 occurs at positions 455 and 460. Omega-N-methylarginine is present on residues arginine 475 and arginine 481. Arginine 493 is modified (asymmetric dimethylarginine; alternate). The residue at position 493 (arginine 493) is a Dimethylated arginine; alternate. The residue at position 493 (arginine 493) is an Omega-N-methylarginine; alternate. The residue at position 506 (arginine 506) is an Omega-N-methylarginine. Lysine 512 is subject to N6-acetyllysine. Arginine 518 is modified (omega-N-methylarginine). One can recognise a PABC domain in the interval 542-619 (QEPLTASMLA…AVAVLQAHQA (78 aa)).

This sequence belongs to the polyadenylate-binding protein type-1 family. May form homodimers. Component of a multisubunit autoregulatory ribonucleoprotein complex (ARC), at least composed of IGF2BP1, PABPC1 and CSDE1. Directly interacts with IGF2BP1. Part of a complex associated with the FOS mCRD domain and consisting of HNRPD, SYNCRIP, PAIP1 and CSDE1/UNR. Interacts with PAIP1 and PAIP2 (via the PABPC1-interacting motifs PAM1 and PAM2). Interacts with PAIP1 with a 1:1 stoichiometry and with PAIP2 with a 1:2 stoichiometry. The interaction with CSDE1 is direct and RNA-independent. Found in a mRNP complex with YBX2. Interacts with TENT2/GLD2. Identified in the spliceosome C complex. Identified in a mRNP complex, at least composed of DHX9, DDX3X, ELAVL1, HNRNPU, IGF2BP1, ILF3, PABPC1, PCBP2, PTBP2, STAU1, STAU2, SYNCRIP and YBX1. The interaction with DDX3X is direct and RNA-independent. This interaction increases in stressed cells and decreases during cell recovery. Identified in a IGF2BP1-dependent mRNP granule complex containing untranslated mRNAs. Interacts with NXF1/TAP. Interacts with PIWIL1. Interacts with AGO1, AGO2, GSPT1 and GSPT2. Interacts with LARP4B. Interacts (via the second and third RRM domains and the C-terminus) with PAIP2B (via central acidic portion and C-terminus). Forms a complex with LARP1 and SHFL. Interacts with LARP4. Interacts with ZFC3H1 in a RNase-sensitive manner. Interacts with TRIM71 (via NHL repeats) in an RNA-dependent manner. Interacts with TENT5C; the interaction has no effect on TENT5C poly(A) polymerase function. Interacts with G3BP1 and G3BP2. Interacts with ENDOV; the interaction is RNA-dependent and stimulates ENDOV activity. Interacts with UPF1; the interaction is RNA-dependent. Interacts with IGF2BP2 and IGF2BP3. May interact with SETX. Interacts with RBM46. Interacts with PAN3. Post-translationally, phosphorylated by MAPKAPK2. Methylated by CARM1. Arg-493 is dimethylated, probably to asymmetric dimethylarginine.

It localises to the cytoplasm. Its subcellular location is the stress granule. It is found in the nucleus. The protein resides in the cell projection. The protein localises to the lamellipodium. Binds the poly(A) tail of mRNA, including that of its own transcript, and regulates processes of mRNA metabolism such as pre-mRNA splicing and mRNA stability. Its function in translational initiation regulation can either be enhanced by PAIP1 or repressed by PAIP2. Can probably bind to cytoplasmic RNA sequences other than poly(A) in vivo. Binds to N6-methyladenosine (m6A)-containing mRNAs and contributes to MYC stability by binding to m6A-containing MYC mRNAs. Involved in translationally coupled mRNA turnover. Implicated with other RNA-binding proteins in the cytoplasmic deadenylation/translational and decay interplay of the FOS mRNA mediated by the major coding-region determinant of instability (mCRD) domain. Involved in regulation of nonsense-mediated decay (NMD) of mRNAs containing premature stop codons; for the recognition of premature termination codons (PTC) and initiation of NMD a competitive interaction between UPF1 and PABPC1 with the ribosome-bound release factors is proposed. By binding to long poly(A) tails, may protect them from uridylation by ZCCHC6/ZCCHC11 and hence contribute to mRNA stability. This is Polyadenylate-binding protein 1 (PABPC1) from Bos taurus (Bovine).